Here is a 323-residue protein sequence, read N- to C-terminus: o-succinylbenzoate synthase (323 aa).

The active-site Proton donor is Lys-134. Mg(2+) is bound by residues Asp-162, Glu-191, and Asp-214. Lys-236 (proton acceptor) is an active-site residue.

It belongs to the mandelate racemase/muconate lactonizing enzyme family. MenC type 1 subfamily. A divalent metal cation serves as cofactor.

The catalysed reaction is (1R,6R)-6-hydroxy-2-succinyl-cyclohexa-2,4-diene-1-carboxylate = 2-succinylbenzoate + H2O. It functions in the pathway quinol/quinone metabolism; 1,4-dihydroxy-2-naphthoate biosynthesis; 1,4-dihydroxy-2-naphthoate from chorismate: step 4/7. The protein operates within quinol/quinone metabolism; menaquinone biosynthesis. Its function is as follows. Converts 2-succinyl-6-hydroxy-2,4-cyclohexadiene-1-carboxylate (SHCHC) to 2-succinylbenzoate (OSB). In Yersinia pseudotuberculosis serotype O:1b (strain IP 31758), this protein is o-succinylbenzoate synthase.